The following is a 291-amino-acid chain: Acetyl-coenzyme A carboxylase carboxyl transferase subunit beta (291 aa).

The CoA carboxyltransferase N-terminal domain occupies 29-291; sequence LWSKCPECGE…MHQQPAAVSA (263 aa). The Zn(2+) site is built by Cys33, Cys36, Cys52, and Cys55. Residues 33–55 form a C4-type zinc finger; sequence CPECGEVVYRKDLIANASVCASC.

This sequence belongs to the AccD/PCCB family. As to quaternary structure, acetyl-CoA carboxylase is a heterohexamer composed of biotin carboxyl carrier protein (AccB), biotin carboxylase (AccC) and two subunits each of ACCase subunit alpha (AccA) and ACCase subunit beta (AccD). Zn(2+) serves as cofactor.

It is found in the cytoplasm. It carries out the reaction N(6)-carboxybiotinyl-L-lysyl-[protein] + acetyl-CoA = N(6)-biotinyl-L-lysyl-[protein] + malonyl-CoA. Its pathway is lipid metabolism; malonyl-CoA biosynthesis; malonyl-CoA from acetyl-CoA: step 1/1. Its function is as follows. Component of the acetyl coenzyme A carboxylase (ACC) complex. Biotin carboxylase (BC) catalyzes the carboxylation of biotin on its carrier protein (BCCP) and then the CO(2) group is transferred by the transcarboxylase to acetyl-CoA to form malonyl-CoA. This chain is Acetyl-coenzyme A carboxylase carboxyl transferase subunit beta, found in Synechococcus sp. (strain RCC307).